A 292-amino-acid polypeptide reads, in one-letter code: N-acetylneuraminate lyase (292 aa).

Aceneuramate-binding residues include S47 and T48. The Proton donor role is filled by Y136. K164 acts as the Schiff-base intermediate with substrate in catalysis. Aceneuramate is bound by residues T166, G188, D190, E191, and S207.

The protein belongs to the DapA family. NanA subfamily. Homotetramer.

It is found in the cytoplasm. The enzyme catalyses aceneuramate = aldehydo-N-acetyl-D-mannosamine + pyruvate. It participates in amino-sugar metabolism; N-acetylneuraminate degradation; D-fructose 6-phosphate from N-acetylneuraminate: step 1/5. Its function is as follows. Catalyzes the reversible aldol cleavage of N-acetylneuraminic acid (sialic acid; Neu5Ac) to form pyruvate and N-acetylmannosamine (ManNAc) via a Schiff base intermediate. The sequence is that of N-acetylneuraminate lyase from Actinobacillus pleuropneumoniae serotype 3 (strain JL03).